Here is an 86-residue protein sequence, read N- to C-terminus: Large ribosomal subunit protein bL31B (86 aa).

This sequence belongs to the bacterial ribosomal protein bL31 family. Type B subfamily. As to quaternary structure, part of the 50S ribosomal subunit.

This Streptococcus equi subsp. equi (strain 4047) protein is Large ribosomal subunit protein bL31B.